A 32-amino-acid polypeptide reads, in one-letter code: Tail virion protein G9P (32 aa).

A helical transmembrane segment spans residues 8–24; the sequence is FASFVLGWCLRSGITYF.

This sequence belongs to the inovirus G9P protein family.

The protein localises to the virion. It is found in the host membrane. May initiate with G7P the virion concomitant assembly-budding process, by interacting with the packaging signal of the viral genome. The assembly-budding takes place at the host inner membrane. In turn, G7P and G9P are present at the end of the filamentous virion that emerges first from the bacterial host. The polypeptide is Tail virion protein G9P (IX) (Escherichia coli (Bacteriophage f1)).